Here is a 185-residue protein sequence, read N- to C-terminus: Ribosome-recycling factor (185 aa).

The protein belongs to the RRF family.

It localises to the cytoplasm. In terms of biological role, responsible for the release of ribosomes from messenger RNA at the termination of protein biosynthesis. May increase the efficiency of translation by recycling ribosomes from one round of translation to another. The polypeptide is Ribosome-recycling factor (Roseiflexus sp. (strain RS-1)).